We begin with the raw amino-acid sequence, 445 residues long: Histamine H3 receptor (445 aa).

At 1 to 39 (MERAPPDGLMNASGTLAGEAAAAGGARGFSAAWTAVLAA) the chain is on the extracellular side. A glycan (N-linked (GlcNAc...) asparagine) is linked at Asn11. The helical transmembrane segment at 40-60 (LMALLIVATVLGNALVMLAFV) threads the bilayer. At 61 to 70 (ADSSLRTQNN) the chain is on the cytoplasmic side. The chain crosses the membrane as a helical span at residues 71–91 (FFLLNLAISDFLVGAFCIPLY). The Extracellular segment spans residues 92 to 108 (VPYVLTGRWTFGRGLCK). Cys107 and Cys188 are joined by a disulfide. The chain crosses the membrane as a helical span at residues 109 to 129 (LWLVVDYLLCASSVFNIVLIS). The Cytoplasmic portion of the chain corresponds to 130–156 (YDRFLSVTRAVSYRAQQGDTRRAVRKM). Residues 157–177 (ALVWVLAFLLYGPAILSWEYL) form a helical membrane-spanning segment. Residues 178 to 196 (SGGSSIPEGHCYAEFFYNW) are Extracellular-facing. Residues 197–217 (YFLITASTLEFFTPFLSVTFF) traverse the membrane as a helical segment. The Cytoplasmic portion of the chain corresponds to 218 to 359 (NLSIYLNIQR…LSRDKKVAKS (142 aa)). Disordered stretches follow at residues 234–259 (DGGREAGPEPPPDAQPSPPPAPPSCW) and 286–336 (AGEA…LEKR). The segment covering 241-256 (PEPPPDAQPSPPPAPP) has biased composition (pro residues). Over residues 290–299 (ALGGGSGGGA) the composition is skewed to gly residues. The segment covering 300–312 (AASPTSSSGSSSR) has biased composition (low complexity). A helical transmembrane segment spans residues 360-380 (LAIIVSIFGLCWAPYTLLMII). At 381-396 (RAACHGRCIPDYWYET) the chain is on the extracellular side. Residues 397-417 (SFWLLWANSAVNPVLYPLCHY) traverse the membrane as a helical segment. The Cytoplasmic segment spans residues 418–445 (SFRRAFTKLLCPQKLKVQPHGSLEQCWK). Phosphoserine is present on Ser439.

Belongs to the G-protein coupled receptor 1 family. As to expression, expressed abundantly in brain, most notably throughout the thalamus, the ventromedial hypothalamus and the caudate nucleus. Isoform 1 is largely predominant in all tissues.

Its subcellular location is the cell membrane. The H3 subclass of histamine receptors could mediate the histamine signals in CNS and peripheral nervous system. Signals through the inhibition of adenylate cyclase and displays high constitutive activity (spontaneous activity in the absence of agonist). The sequence is that of Histamine H3 receptor (Hrh3) from Rattus norvegicus (Rat).